A 473-amino-acid chain; its full sequence is 3-isopropylmalate dehydratase large subunit (473 aa).

[4Fe-4S] cluster-binding residues include cysteine 351, cysteine 414, and cysteine 417.

It belongs to the aconitase/IPM isomerase family. LeuC type 1 subfamily. As to quaternary structure, heterodimer of LeuC and LeuD. [4Fe-4S] cluster is required as a cofactor.

It carries out the reaction (2R,3S)-3-isopropylmalate = (2S)-2-isopropylmalate. The protein operates within amino-acid biosynthesis; L-leucine biosynthesis; L-leucine from 3-methyl-2-oxobutanoate: step 2/4. In terms of biological role, catalyzes the isomerization between 2-isopropylmalate and 3-isopropylmalate, via the formation of 2-isopropylmaleate. The chain is 3-isopropylmalate dehydratase large subunit from Acidovorax ebreus (strain TPSY) (Diaphorobacter sp. (strain TPSY)).